Here is a 117-residue protein sequence, read N- to C-terminus: Large ribosomal subunit protein bL20c (117 aa).

It belongs to the bacterial ribosomal protein bL20 family.

The protein localises to the plastid. It is found in the chloroplast. In terms of biological role, binds directly to 23S ribosomal RNA and is necessary for the in vitro assembly process of the 50S ribosomal subunit. It is not involved in the protein synthesizing functions of that subunit. The protein is Large ribosomal subunit protein bL20c of Draba nemorosa (Woodland whitlowgrass).